Here is a 225-residue protein sequence, read N- to C-terminus: 2-C-methyl-D-erythritol 4-phosphate cytidylyltransferase (225 aa).

The protein belongs to the IspD/TarI cytidylyltransferase family. IspD subfamily.

The enzyme catalyses 2-C-methyl-D-erythritol 4-phosphate + CTP + H(+) = 4-CDP-2-C-methyl-D-erythritol + diphosphate. It functions in the pathway isoprenoid biosynthesis; isopentenyl diphosphate biosynthesis via DXP pathway; isopentenyl diphosphate from 1-deoxy-D-xylulose 5-phosphate: step 2/6. In terms of biological role, catalyzes the formation of 4-diphosphocytidyl-2-C-methyl-D-erythritol from CTP and 2-C-methyl-D-erythritol 4-phosphate (MEP). The sequence is that of 2-C-methyl-D-erythritol 4-phosphate cytidylyltransferase from Cereibacter sphaeroides (strain ATCC 17023 / DSM 158 / JCM 6121 / CCUG 31486 / LMG 2827 / NBRC 12203 / NCIMB 8253 / ATH 2.4.1.) (Rhodobacter sphaeroides).